The primary structure comprises 216 residues: Thymidine kinase (216 aa).

ATP contacts are provided by residues 9-16 (GPMDSGKS) and 86-89 (DEAQ). The Proton acceptor role is filled by E87.

This sequence belongs to the thymidine kinase family. In terms of assembly, homotetramer.

It localises to the cytoplasm. The catalysed reaction is thymidine + ATP = dTMP + ADP + H(+). The sequence is that of Thymidine kinase from Cutibacterium acnes (strain DSM 16379 / KPA171202) (Propionibacterium acnes).